A 298-amino-acid polypeptide reads, in one-letter code: Adaptation to cold protein C (298 aa).

In terms of assembly, interacts with the C-terminal extension of AtcJ. Also interacts with AtcB, but not with AtcA.

Its activity is regulated as follows. Interaction with AtcJ stabilizes AtcC. Its function is as follows. Involved in cold adaptation. This chain is Adaptation to cold protein C, found in Shewanella oneidensis (strain ATCC 700550 / JCM 31522 / CIP 106686 / LMG 19005 / NCIMB 14063 / MR-1).